The primary structure comprises 391 residues: Tryptophan synthase beta chain (391 aa).

Lys-84 carries the N6-(pyridoxal phosphate)lysine modification.

The protein belongs to the TrpB family. Tetramer of two alpha and two beta chains. It depends on pyridoxal 5'-phosphate as a cofactor.

The catalysed reaction is (1S,2R)-1-C-(indol-3-yl)glycerol 3-phosphate + L-serine = D-glyceraldehyde 3-phosphate + L-tryptophan + H2O. It functions in the pathway amino-acid biosynthesis; L-tryptophan biosynthesis; L-tryptophan from chorismate: step 5/5. Its function is as follows. The beta subunit is responsible for the synthesis of L-tryptophan from indole and L-serine. This chain is Tryptophan synthase beta chain, found in Thermoanaerobacter pseudethanolicus (strain ATCC 33223 / 39E) (Clostridium thermohydrosulfuricum).